The following is a 729-amino-acid chain: Neurochondrin (729 aa).

Position 2 is an N-acetylserine (Ser-2). Ser-2 bears the Phosphoserine mark. 2 S-palmitoyl cysteine lipidation sites follow: Cys-3 and Cys-4. Arg-75 carries the post-translational modification Asymmetric dimethylarginine. Residue Ser-448 is modified to Phosphoserine.

This sequence belongs to the neurochondrin family. Interacts with MCHR1. Interacts with SEMA4C. Interacts with DIAPH1 (via FH3 domain). Interacts with GRM5. Post-translationally, palmitoylated. Palmitoylation by ZDHHC1, ZDHHC3 and ZDHHC11 regulates the association of NCDN with endosome membranes. May also be palmitoylated by ZDHHC7.

Its subcellular location is the cytoplasm. The protein resides in the cytosol. It is found in the endosome membrane. It localises to the cell projection. The protein localises to the dendrite. Its subcellular location is the postsynapse. Functionally, probably involved in signal transduction, in the nervous system, via increasing cell surface localization of GRM5 and positively regulating its signaling. Required for the spatial learning process. Acts as a negative regulator of Ca(2+)-calmodulin-dependent protein kinase 2 (CaMK2) phosphorylation. May play a role in modulating melanin-concentrating hormone-mediated functions via its interaction with MCHR1 that interferes with G protein-coupled signal transduction. May be involved in bone metabolism. May also be involved in neurite outgrowth. The polypeptide is Neurochondrin (NCDN) (Bos taurus (Bovine)).